Here is a 628-residue protein sequence, read N- to C-terminus: Chaperone protein DnaK (628 aa).

Residue Thr-174 is modified to Phosphothreonine; by autocatalysis. The interval 589 to 628 (AAGGAGPDMGAGAGPDMGAGASNGSAPYGDDVVDGDYKEV) is disordered. Over residues 591 to 605 (GGAGPDMGAGAGPDM) the composition is skewed to gly residues.

Belongs to the heat shock protein 70 family.

Acts as a chaperone. This Lachnospira eligens (strain ATCC 27750 / DSM 3376 / VPI C15-48 / C15-B4) (Eubacterium eligens) protein is Chaperone protein DnaK.